A 427-amino-acid polypeptide reads, in one-letter code: Adenylosuccinate synthetase (427 aa).

GTP contacts are provided by residues 12-18 (GDEGKGK) and 40-42 (GHT). Asp13 functions as the Proton acceptor in the catalytic mechanism. 2 residues coordinate Mg(2+): Asp13 and Gly40. IMP-binding positions include 13–16 (DEGK), 38–41 (NAGH), Thr128, Arg142, Gln223, Thr238, and Arg302. His41 acts as the Proton donor in catalysis. Residue 298-304 (TTTGRPR) participates in substrate binding. Residues Arg304, 330–332 (SID), and 412–414 (SVG) contribute to the GTP site.

Belongs to the adenylosuccinate synthetase family. As to quaternary structure, homodimer. Requires Mg(2+) as cofactor.

The protein resides in the cytoplasm. The enzyme catalyses IMP + L-aspartate + GTP = N(6)-(1,2-dicarboxyethyl)-AMP + GDP + phosphate + 2 H(+). It functions in the pathway purine metabolism; AMP biosynthesis via de novo pathway; AMP from IMP: step 1/2. Its function is as follows. Plays an important role in the de novo pathway of purine nucleotide biosynthesis. Catalyzes the first committed step in the biosynthesis of AMP from IMP. This Staphylococcus aureus (strain MW2) protein is Adenylosuccinate synthetase.